A 1025-amino-acid polypeptide reads, in one-letter code: Multidrug resistance protein MdtC (1025 aa).

The next 12 helical transmembrane spans lie at 3-23 (FFALFIYRPVATILLSVAITL), 333-353 (EVEQTLVISVALVILVVFLFL), 360-380 (IIPAVAVPVSLIGTFAAMYLC), 387-407 (LSLMALTIATGFVVDDAIVVL), 431-451 (VGFTVLSMSLSLVAVFLPLLL), 463-483 (FAVTLSVAIGISLLVSLTLTP), 528-548 (LVGAVLLGTIALNIWLYISIP), 853-873 (VILIIAAIATVYIVLGILYES), 875-895 (VHPLTILSTLPSAGVGALLAL), 897-917 (LFNAPFSLIALIGIMLLIGIV), 953-973 (PIMMTTLAALFGALPLVLSGG), and 984-1004 (ITIVGGLVMSQLLTLYTTPVV).

It belongs to the resistance-nodulation-cell division (RND) (TC 2.A.6) family. MdtC subfamily. Part of a tripartite efflux system composed of MdtA, MdtB and MdtC. MdtC forms a heteromultimer with MdtB.

It is found in the cell inner membrane. The MdtABC tripartite complex confers resistance against novobiocin and deoxycholate. This Escherichia coli O81 (strain ED1a) protein is Multidrug resistance protein MdtC.